The following is a 180-amino-acid chain: Oligoribonuclease (180 aa).

The region spanning 7–170 (LIWIDLEMTG…DDIRESIAEL (164 aa)) is the Exonuclease domain. Residue Y128 is part of the active site.

This sequence belongs to the oligoribonuclease family.

Its subcellular location is the cytoplasm. In terms of biological role, 3'-to-5' exoribonuclease specific for small oligoribonucleotides. In Pseudomonas aeruginosa (strain UCBPP-PA14), this protein is Oligoribonuclease.